A 232-amino-acid chain; its full sequence is Small ribosomal subunit protein uS3 (232 aa).

The 69-residue stretch at 39–107 folds into the KH type-2 domain; it reads VRQFLTSELK…PAQINIAEVR (69 aa). Residues 213 to 232 are disordered; it reads AANAVEPKGDKPKKQRKGRK.

It belongs to the universal ribosomal protein uS3 family. In terms of assembly, part of the 30S ribosomal subunit. Forms a tight complex with proteins S10 and S14.

In terms of biological role, binds the lower part of the 30S subunit head. Binds mRNA in the 70S ribosome, positioning it for translation. The protein is Small ribosomal subunit protein uS3 of Vibrio parahaemolyticus serotype O3:K6 (strain RIMD 2210633).